Here is a 91-residue protein sequence, read N- to C-terminus: Sec-independent protein translocase protein TatA (91 aa).

A helical transmembrane segment spans residues 1–21 (MGIFDWKHWIVILIVVVLVFG). A disordered region spans residues 42 to 91 (AMNDDDKPAEQPAPQPQQAQAAPQGSPLNQPHTIDAQAHKVDEPIRKDQV). Low complexity predominate over residues 51-65 (EQPAPQPQQAQAAPQ). Basic and acidic residues predominate over residues 78–91 (QAHKVDEPIRKDQV).

The protein belongs to the TatA/E family. As to quaternary structure, the Tat system comprises two distinct complexes: a TatABC complex, containing multiple copies of TatA, TatB and TatC subunits, and a separate TatA complex, containing only TatA subunits. Substrates initially bind to the TatABC complex, which probably triggers association of the separate TatA complex to form the active translocon.

The protein resides in the cell inner membrane. In terms of biological role, part of the twin-arginine translocation (Tat) system that transports large folded proteins containing a characteristic twin-arginine motif in their signal peptide across membranes. TatA could form the protein-conducting channel of the Tat system. The chain is Sec-independent protein translocase protein TatA from Pseudomonas savastanoi pv. phaseolicola (strain 1448A / Race 6) (Pseudomonas syringae pv. phaseolicola (strain 1448A / Race 6)).